Here is a 128-residue protein sequence, read N- to C-terminus: Ribonuclease pancreatic (128 aa).

The span at 1 to 13 shows a compositional bias: basic and acidic residues; that stretch reads GESRAEKFQRQHM. The tract at residues 1–24 is disordered; that stretch reads GESRAEKFQRQHMDSGSSPSSSST. The substrate site is built by lysine 7 and arginine 10. Catalysis depends on histidine 12, which acts as the Proton acceptor. Cystine bridges form between cysteine 26–cysteine 84, cysteine 40–cysteine 95, cysteine 58–cysteine 110, and cysteine 65–cysteine 72. N-linked (GlcNAc...) asparagine glycosylation occurs at asparagine 34. Substrate is bound by residues 41-45, lysine 66, and arginine 85; that span reads KSVNT. Histidine 119 functions as the Proton donor in the catalytic mechanism.

The protein belongs to the pancreatic ribonuclease family. In terms of assembly, monomer. Interacts with and forms tight 1:1 complexes with RNH1. Dimerization of two such complexes may occur. Interaction with RNH1 inhibits this protein. As to expression, pancreas and other tissues and body fluids (indicating it may have other physiological functions besides its role in digestion).

The protein localises to the secreted. The enzyme catalyses an [RNA] containing cytidine + H2O = an [RNA]-3'-cytidine-3'-phosphate + a 5'-hydroxy-ribonucleotide-3'-[RNA].. The catalysed reaction is an [RNA] containing uridine + H2O = an [RNA]-3'-uridine-3'-phosphate + a 5'-hydroxy-ribonucleotide-3'-[RNA].. Its function is as follows. Endonuclease that catalyzes the cleavage of RNA on the 3' side of pyrimidine nucleotides. Acts on single-stranded and double-stranded RNA. The sequence is that of Ribonuclease pancreatic (RNASE1) from Semnopithecus entellus (Northern plains gray langur).